Reading from the N-terminus, the 181-residue chain is Adenine phosphoribosyltransferase (181 aa).

Belongs to the purine/pyrimidine phosphoribosyltransferase family. Homodimer.

It is found in the cytoplasm. The catalysed reaction is AMP + diphosphate = 5-phospho-alpha-D-ribose 1-diphosphate + adenine. It participates in purine metabolism; AMP biosynthesis via salvage pathway; AMP from adenine: step 1/1. Catalyzes a salvage reaction resulting in the formation of AMP, that is energically less costly than de novo synthesis. This chain is Adenine phosphoribosyltransferase, found in Methylobacterium radiotolerans (strain ATCC 27329 / DSM 1819 / JCM 2831 / NBRC 15690 / NCIMB 10815 / 0-1).